The sequence spans 341 residues: MLTYALEQILLGKHLTRTVAEEAMGEIMDGKATPAQIGAFLASLRLKGEQVEEIIGFAKAMRARAMNFPIELPGLVDTCGTGGDGSHTFNISTASAVVAAADGVRIAKHGNRAVSSKSGSADVLEALGVPVNLSPKDAADCLRATNLCFLFAPLYHQAMKHAAGPRKELAIRTVFNLLGPLTNPAGASHQLMGVYDAKLLPNVAAVLHELDVKRALVVAGSDGLDELTVTGTSHIAELRDGRILTYEIEPEQFGLRRHEKDALRGGDANENAKIIHDVFSGARGAARDIVLLNAGAILYLADRVSSIETGVIRAAELIDGGLVMRKLEHVRHIAGGMIHAS.

Residues Gly-80, 83 to 84 (GD), Thr-88, 90 to 93 (NIST), 108 to 116 (KHGNRAVSS), and Ser-120 each bind 5-phospho-alpha-D-ribose 1-diphosphate. An anthranilate-binding site is contributed by Gly-80. Residue Ser-92 participates in Mg(2+) binding. An anthranilate-binding site is contributed by Asn-111. Arg-166 is an anthranilate binding site. Positions 225 and 226 each coordinate Mg(2+).

Belongs to the anthranilate phosphoribosyltransferase family. In terms of assembly, homodimer. It depends on Mg(2+) as a cofactor.

It catalyses the reaction N-(5-phospho-beta-D-ribosyl)anthranilate + diphosphate = 5-phospho-alpha-D-ribose 1-diphosphate + anthranilate. It participates in amino-acid biosynthesis; L-tryptophan biosynthesis; L-tryptophan from chorismate: step 2/5. Catalyzes the transfer of the phosphoribosyl group of 5-phosphorylribose-1-pyrophosphate (PRPP) to anthranilate to yield N-(5'-phosphoribosyl)-anthranilate (PRA). This is Anthranilate phosphoribosyltransferase from Brevibacillus brevis (strain 47 / JCM 6285 / NBRC 100599).